A 348-amino-acid polypeptide reads, in one-letter code: Large ribosomal subunit protein uL3m (348 aa).

The N-terminal 40 residues, 1–40, are a transit peptide targeting the mitochondrion; it reads MPGWRLLAWAGARVLDRGTGGLGTALGSGNRTDICVLVRS.

The protein belongs to the universal ribosomal protein uL3 family. As to quaternary structure, component of the mitochondrial ribosome large subunit (39S) which comprises a 16S rRNA and about 50 distinct proteins.

It localises to the mitochondrion. This chain is Large ribosomal subunit protein uL3m (MRPL3), found in Bos taurus (Bovine).